Consider the following 466-residue polypeptide: MPRIRKPPSRSLPEPSAALANTTTRNLWLHFARHGAGIQHPVIVRGDGVTIFDDRGKSYLDALSGLFVVQVGYGRAELAEAAARQAGTLGYFPLWGYATPPAIELAERLARYAPGDLNRVFFTSGGTEAVETAWKVAKQYFKLTGKPGKQKVISRSIAYHGTTQGALAITGLPLFKAPFEPLTPGGFRVPNTNFYRAPLHTDLKEFGRWAADRIAEAIEFEGPDTVAAVFLEPVQNAGGCIPAPPGYFERVREICDRYDVLLVSDEVICAFGRIGSMFACEDLGYVPDMITCAKGLTSGYSPLGAMIASDRLFEPFNDGETMFAHGYTFGGHPVSAAVGLANLDIFEREGLSDHVKRNSPALRATLEKLYDLPIVGDIRGEGYFFGIELVKDQATKQTFTDDERARLLGQVSAALFEAGLYCRTDDRGDPVVQVAPPLISGQPEFDTIETILRSVLTDTGRKYLHL.

The residue at position 294 (Lys294) is an N6-(pyridoxal phosphate)lysine.

Belongs to the class-III pyridoxal-phosphate-dependent aminotransferase family. It depends on pyridoxal 5'-phosphate as a cofactor.

Functionally, probable aminotransferase. This is Probable aminotransferase Rv3329 from Mycobacterium tuberculosis (strain ATCC 25618 / H37Rv).